A 427-amino-acid chain; its full sequence is Acetylornithine aminotransferase, mitochondrial (427 aa).

Lys279 is subject to N6-(pyridoxal phosphate)lysine.

Belongs to the class-III pyridoxal-phosphate-dependent aminotransferase family. The cofactor is pyridoxal 5'-phosphate.

The protein resides in the mitochondrion matrix. The enzyme catalyses N(2)-acetyl-L-ornithine + 2-oxoglutarate = N-acetyl-L-glutamate 5-semialdehyde + L-glutamate. Its pathway is amino-acid biosynthesis; L-arginine biosynthesis; N(2)-acetyl-L-ornithine from L-glutamate: step 4/4. The polypeptide is Acetylornithine aminotransferase, mitochondrial (ARG8) (Candida glabrata (strain ATCC 2001 / BCRC 20586 / JCM 3761 / NBRC 0622 / NRRL Y-65 / CBS 138) (Yeast)).